The following is a 250-amino-acid chain: uncharacterized protein (250 aa).

The protein belongs to the carbohydrate kinase PfkB family.

This is an uncharacterized protein from Archaeoglobus fulgidus (strain ATCC 49558 / DSM 4304 / JCM 9628 / NBRC 100126 / VC-16).